A 311-amino-acid chain; its full sequence is Lipoyl synthase (311 aa).

[4Fe-4S] cluster is bound by residues Cys36, Cys41, Cys47, Cys66, Cys70, Cys73, and Ser280. The Radical SAM core domain maps to 51-269; sequence RDGPGTATFM…RVAESEFGFL (219 aa).

The protein belongs to the radical SAM superfamily. Lipoyl synthase family. Requires [4Fe-4S] cluster as cofactor.

Its subcellular location is the cytoplasm. It carries out the reaction [[Fe-S] cluster scaffold protein carrying a second [4Fe-4S](2+) cluster] + N(6)-octanoyl-L-lysyl-[protein] + 2 oxidized [2Fe-2S]-[ferredoxin] + 2 S-adenosyl-L-methionine + 4 H(+) = [[Fe-S] cluster scaffold protein] + N(6)-[(R)-dihydrolipoyl]-L-lysyl-[protein] + 4 Fe(3+) + 2 hydrogen sulfide + 2 5'-deoxyadenosine + 2 L-methionine + 2 reduced [2Fe-2S]-[ferredoxin]. The protein operates within protein modification; protein lipoylation via endogenous pathway; protein N(6)-(lipoyl)lysine from octanoyl-[acyl-carrier-protein]: step 2/2. Its function is as follows. Catalyzes the radical-mediated insertion of two sulfur atoms into the C-6 and C-8 positions of the octanoyl moiety bound to the lipoyl domains of lipoate-dependent enzymes, thereby converting the octanoylated domains into lipoylated derivatives. The chain is Lipoyl synthase from Halobacterium salinarum (strain ATCC 29341 / DSM 671 / R1).